A 97-amino-acid chain; its full sequence is Protein RnfH (97 aa).

The protein belongs to the UPF0125 (RnfH) family.

This is Protein RnfH from Aliivibrio salmonicida (strain LFI1238) (Vibrio salmonicida (strain LFI1238)).